Here is a 174-residue protein sequence, read N- to C-terminus: Larval cuticle protein LCP-22 (174 aa).

Positions 1–16 (MKFAVVFACMVAAVAA) are cleaved as a signal peptide. The 72-residue stretch at 82–153 (DGSYTYFYET…PTGNAIPTSP (72 aa)) folds into the Chitin-binding type R&amp;R domain.

Its function is as follows. Component of the cuticle of the larva of Bombyx mori. This is Larval cuticle protein LCP-22 (LCP22) from Bombyx mori (Silk moth).